We begin with the raw amino-acid sequence, 138 residues long: Basic leucine zipper 8 (138 aa).

Residues 30-67 (NLPATSDDSSRTAEDNERKRRRKVSNRESARRSRMRKQ) are disordered. Residues 37–47 (DSSRTAEDNER) are compositionally biased toward basic and acidic residues. The bZIP domain occupies 45–108 (NERKRRRKVS…EKVIEENMKL (64 aa)). Positions 47-68 (RKRRRKVSNRESARRSRMRKQR) are basic motif. The Nuclear localization signal signature appears at 48–55 (KRRRKVSN). The tract at residues 73-87 (LWSMLVQLINKNKSL) is leucine-zipper.

The protein belongs to the bZIP family. Homodimer.

The protein localises to the nucleus. The chain is Basic leucine zipper 8 from Arabidopsis thaliana (Mouse-ear cress).